Consider the following 357-residue polypeptide: Chorismate synthase (357 aa).

Arg-46 provides a ligand contact to NADP(+). Residues 123-125, 235-236, Gly-275, 290-294, and Arg-316 each bind FMN; these read RSS, NA, and KPTPS.

It belongs to the chorismate synthase family. In terms of assembly, homotetramer. It depends on FMNH2 as a cofactor.

It catalyses the reaction 5-O-(1-carboxyvinyl)-3-phosphoshikimate = chorismate + phosphate. It participates in metabolic intermediate biosynthesis; chorismate biosynthesis; chorismate from D-erythrose 4-phosphate and phosphoenolpyruvate: step 7/7. Catalyzes the anti-1,4-elimination of the C-3 phosphate and the C-6 proR hydrogen from 5-enolpyruvylshikimate-3-phosphate (EPSP) to yield chorismate, which is the branch point compound that serves as the starting substrate for the three terminal pathways of aromatic amino acid biosynthesis. This reaction introduces a second double bond into the aromatic ring system. This Nitratiruptor sp. (strain SB155-2) protein is Chorismate synthase.